The following is a 539-amino-acid chain: Acrosin-binding protein (539 aa).

The signal sequence occupies residues Met1–Ala25. The interval Gln26–Phe106 is pro-ACR binding. Residues Gln26 to Arg269 constitute a propeptide, removed in active form. The disordered stretch occupies residues Leu186 to Ser259. The span at Gly192–Glu211 shows a compositional bias: basic and acidic residues. The span at Gly212 to Leu238 shows a compositional bias: acidic residues. The tract at residues Leu315 to Arg423 is pro-ACR binding.

Binds specifically to the 55- and 53-kDa proacrosins and the 49-kDa acrosin intermediate, but is not capable of binding 43-kDa acrosin intermediate and 32-kDa mature acrosin. The N-terminus is blocked. Post-translationally, synthesized as a 60-kDa precursor, the 35-kDa mature form is post-translationally produced by the removal of the N-terminal half of the precursor during sperm maturation in the testis and/or epididymis. In terms of processing, phosphorylated on Tyr residues in capacitated sperm. As to expression, specifically expressed in testis.

The protein resides in the secreted. It localises to the cytoplasmic vesicle. The protein localises to the secretory vesicle. It is found in the acrosome. Functionally, acrosomal protein that maintains proacrosin (pro-ACR) as an enzymatically inactive zymogen in the acrosome. Involved also in the acrosome formation. The sequence is that of Acrosin-binding protein from Sus scrofa (Pig).